Reading from the N-terminus, the 253-residue chain is GTP cyclohydrolase 1 type 2 homolog (253 aa).

A divalent metal cation contacts are provided by His64, His65, Asp101, His222, and Glu226.

The protein belongs to the GTP cyclohydrolase I type 2/NIF3 family. As to quaternary structure, homohexamer.

The protein is GTP cyclohydrolase 1 type 2 homolog of Halobacterium salinarum (strain ATCC 700922 / JCM 11081 / NRC-1) (Halobacterium halobium).